The chain runs to 217 residues: Adenylate kinase (217 aa).

Gly10–Thr15 serves as a coordination point for ATP. The interval Ser30 to Val59 is NMP. Residues Thr31, Arg36, Leu57–Val59, Gly85–Arg88, and Gln92 each bind AMP. Residues Gly126–Asp163 form an LID region. Arg127 is an ATP binding site. Cys130 and Cys133 together coordinate Zn(2+). Thr136 to Tyr137 contacts ATP. Zn(2+) contacts are provided by Cys150 and Cys153. AMP-binding residues include Arg160 and Arg171. Lys199 provides a ligand contact to ATP.

Belongs to the adenylate kinase family. In terms of assembly, monomer.

It localises to the cytoplasm. It catalyses the reaction AMP + ATP = 2 ADP. Its pathway is purine metabolism; AMP biosynthesis via salvage pathway; AMP from ADP: step 1/1. Catalyzes the reversible transfer of the terminal phosphate group between ATP and AMP. Plays an important role in cellular energy homeostasis and in adenine nucleotide metabolism. The protein is Adenylate kinase of Lachnoclostridium phytofermentans (strain ATCC 700394 / DSM 18823 / ISDg) (Clostridium phytofermentans).